Consider the following 266-residue polypeptide: MLKVEPIPAFQDNYIWAIHDGHCAAVVDPGEAAPVERFLAQSGLALGAIVITHHHGDHQGGVAGLLAAHPRAPSGGPLPVLGPAGERIGGRTQALREGDVATLEAPALTLRVLDVPGHTAGHIAYVADLGEAGPALFCGDTLFASGCGRLFEGTPAQMLASLDKLAALPGDTRVYCAHEYTRSNVRFARAVEPGNAALAAWEARVEALRATNQPTLPTTIAHERQVNPFLRSREPAVRAAVSAHGGTAADDAQNFGALRGWKDNFR.

Residues His53, His55, Asp57, His58, His118, Asp140, and His178 each coordinate Zn(2+).

Belongs to the metallo-beta-lactamase superfamily. Glyoxalase II family. Monomer. Zn(2+) serves as cofactor.

It carries out the reaction an S-(2-hydroxyacyl)glutathione + H2O = a 2-hydroxy carboxylate + glutathione + H(+). It functions in the pathway secondary metabolite metabolism; methylglyoxal degradation; (R)-lactate from methylglyoxal: step 2/2. Its function is as follows. Thiolesterase that catalyzes the hydrolysis of S-D-lactoyl-glutathione to form glutathione and D-lactic acid. This is Hydroxyacylglutathione hydrolase from Cupriavidus taiwanensis (strain DSM 17343 / BCRC 17206 / CCUG 44338 / CIP 107171 / LMG 19424 / R1) (Ralstonia taiwanensis (strain LMG 19424)).